The following is a 1212-amino-acid chain: Metabotropic glutamate receptor 5 (1212 aa).

The N-terminal stretch at 1–20 (MVLLLILSVLLLKEDVRGSA) is a signal peptide. Residues 22–580 (SSERRVVAHM…QYLRWGDPEP (559 aa)) lie on the Extracellular side of the membrane. A disulfide bridge connects residues cysteine 57 and cysteine 99. Tyrosine 64 provides a ligand contact to L-glutamate. The N-linked (GlcNAc...) asparagine glycan is linked to asparagine 88. Residues serine 152 and 173-175 (SAT) each bind L-glutamate. Asparagine 210 is a glycosylation site (N-linked (GlcNAc...) asparagine). Tyrosine 223 is a binding site for L-glutamate. 8 disulfide bridges follow: cysteine 241/cysteine 530, cysteine 276/cysteine 278, cysteine 365/cysteine 381, cysteine 419/cysteine 426, cysteine 511/cysteine 531, cysteine 515/cysteine 534, cysteine 537/cysteine 549, and cysteine 552/cysteine 565. An L-glutamate-binding site is contributed by aspartate 305. Residues asparagine 378 and asparagine 382 are each glycosylated (N-linked (GlcNAc...) asparagine). Residue lysine 396 participates in L-glutamate binding. Asparagine 445 carries an N-linked (GlcNAc...) asparagine glycan. A helical transmembrane segment spans residues 581-603 (IAAVVFACLGLLATLFVTVVFII). The Cytoplasmic segment spans residues 604 to 613 (YRDTPVVKSS). A helical membrane pass occupies residues 614-636 (SRELCYIILAGICLGYLCTFCLI). Over 637-644 (AKPKQIYC) the chain is Extracellular. A disulfide bridge connects residues cysteine 644 and cysteine 733. A helical transmembrane segment spans residues 645-667 (YLQRIGIGLSPAMSYSALVTKTN). Over 668–693 (RIARILAGSKKKICTKKPRFMSACAQ) the chain is Cytoplasmic. The helical transmembrane segment at 694-714 (LVIAFILICIQLGIIVALFIM) threads the bilayer. The Extracellular portion of the chain corresponds to 715–737 (EPPDIMHDYPSIREVYLICNTTN). N-linked (GlcNAc...) asparagine glycosylation occurs at asparagine 734. The chain crosses the membrane as a helical span at residues 738-759 (LGVVTPLGYNGLLILSCTFYAF). The Cytoplasmic segment spans residues 760 to 772 (KTRNVPANFNEAK). A helical membrane pass occupies residues 773–795 (YIAFTMYTTCIIWLAFVPIYFGS). Topologically, residues 796–798 (NYK) are extracellular. A helical transmembrane segment spans residues 799 to 820 (IITMCFSVSLSATVALGCMFVP). Residues 821–1212 (KVYIILAKPE…RDYTQSSSSL (392 aa)) lie on the Cytoplasmic side of the membrane. Serine 861 is modified (phosphoserine). Omega-N-methylarginine is present on residues arginine 869 and arginine 925. 3 disordered regions span residues 937–971 (INKK…GGSA), 1010–1056 (FPAP…SQGS), and 1132–1191 (GAQA…ALCI). The span at 961–971 (LGAGAGAGGSA) shows a compositional bias: gly residues. 2 positions are modified to phosphoserine: serine 1018 and serine 1020. Residues 1132–1153 (GAQAAGDAARESPAAGPEAAAA) show a composition bias toward low complexity. Positions 1174–1185 (DSGSTTPNSPVS) are enriched in polar residues.

Belongs to the G-protein coupled receptor 3 family. In terms of assembly, the PPXXF motif binds HOMER1, HOMER2 and HOMER3. Interacts with SIAH1, RYR1, RYR2, ITPR1, SHANK1, SHANK3 and TAMALIN. Interacts with NCDN. Isoform 2 interacts with NECAB2. Interacts with CAMK2A.

The protein resides in the cell membrane. Functionally, G-protein coupled receptor for glutamate. Ligand binding causes a conformation change that triggers signaling via guanine nucleotide-binding proteins (G proteins) and modulates the activity of down-stream effectors. Signaling activates a phosphatidylinositol-calcium second messenger system and generates a calcium-activated chloride current. Plays an important role in the regulation of synaptic plasticity and the modulation of the neural network activity. This Homo sapiens (Human) protein is Metabotropic glutamate receptor 5 (GRM5).